The chain runs to 352 residues: Phosphoribosylformylglycinamidine cyclo-ligase (352 aa).

This sequence belongs to the AIR synthase family.

It is found in the cytoplasm. The enzyme catalyses 2-formamido-N(1)-(5-O-phospho-beta-D-ribosyl)acetamidine + ATP = 5-amino-1-(5-phospho-beta-D-ribosyl)imidazole + ADP + phosphate + H(+). The protein operates within purine metabolism; IMP biosynthesis via de novo pathway; 5-amino-1-(5-phospho-D-ribosyl)imidazole from N(2)-formyl-N(1)-(5-phospho-D-ribosyl)glycinamide: step 2/2. This Pseudomonas savastanoi pv. phaseolicola (strain 1448A / Race 6) (Pseudomonas syringae pv. phaseolicola (strain 1448A / Race 6)) protein is Phosphoribosylformylglycinamidine cyclo-ligase.